The chain runs to 161 residues: Lipoprotein signal peptidase (161 aa).

2 consecutive transmembrane segments (helical) span residues 64–84 and 92–114; these read YRVPFFIITTSVAVVFLAWFY and VLGRCAVSLVLGGAIGNLIDRVR. Catalysis depends on residues D120 and D138. The chain crosses the membrane as a helical span at residues 131-151; that stretch reads WPAFNVADSAICVGVGMLLLA.

This sequence belongs to the peptidase A8 family.

The protein localises to the cell inner membrane. It carries out the reaction Release of signal peptides from bacterial membrane prolipoproteins. Hydrolyzes -Xaa-Yaa-Zaa-|-(S,diacylglyceryl)Cys-, in which Xaa is hydrophobic (preferably Leu), and Yaa (Ala or Ser) and Zaa (Gly or Ala) have small, neutral side chains.. Its pathway is protein modification; lipoprotein biosynthesis (signal peptide cleavage). This protein specifically catalyzes the removal of signal peptides from prolipoproteins. This Syntrophotalea carbinolica (strain DSM 2380 / NBRC 103641 / GraBd1) (Pelobacter carbinolicus) protein is Lipoprotein signal peptidase.